We begin with the raw amino-acid sequence, 113 residues long: Integration host factor subunit alpha (113 aa).

Belongs to the bacterial histone-like protein family. As to quaternary structure, heterodimer of an alpha and a beta chain.

Its function is as follows. This protein is one of the two subunits of integration host factor, a specific DNA-binding protein that functions in genetic recombination as well as in transcriptional and translational control. The chain is Integration host factor subunit alpha from Rhodopseudomonas palustris (strain BisA53).